We begin with the raw amino-acid sequence, 371 residues long: Aspartate-semialdehyde dehydrogenase (371 aa).

Residues 9–12, 37–38, and Q73 contribute to the NADP(+) site; these read RGMV and TS. R102 is a binding site for phosphate. The active-site Acyl-thioester intermediate is the C135. A substrate-binding site is contributed by Q162. NADP(+) contacts are provided by residues 165–166 and P193; that span reads SG. A substrate-binding site is contributed by E241. K244 is a phosphate binding site. Residue R268 coordinates substrate. H275 functions as the Proton acceptor in the catalytic mechanism. NADP(+) is bound at residue Q351.

It belongs to the aspartate-semialdehyde dehydrogenase family. As to quaternary structure, homodimer.

The catalysed reaction is L-aspartate 4-semialdehyde + phosphate + NADP(+) = 4-phospho-L-aspartate + NADPH + H(+). The protein operates within amino-acid biosynthesis; L-lysine biosynthesis via DAP pathway; (S)-tetrahydrodipicolinate from L-aspartate: step 2/4. It participates in amino-acid biosynthesis; L-methionine biosynthesis via de novo pathway; L-homoserine from L-aspartate: step 2/3. Its pathway is amino-acid biosynthesis; L-threonine biosynthesis; L-threonine from L-aspartate: step 2/5. Functionally, catalyzes the NADPH-dependent formation of L-aspartate-semialdehyde (L-ASA) by the reductive dephosphorylation of L-aspartyl-4-phosphate. This Neisseria meningitidis serogroup A / serotype 4A (strain DSM 15465 / Z2491) protein is Aspartate-semialdehyde dehydrogenase.